Reading from the N-terminus, the 250-residue chain is MTYTVIIPARFASSRLPGKPLADINGKPMVVHVMERALESGAQRVIVATDHPDVETAVKQAGGEVCLTRADHNSGTERLAEVIERYGFTDDDIIVNVQGDEPLIPSVIIRQVAENLAASKAGMATLAVPIETSEEAFNPNAVKVVTDAEGYALYFSRATIPWDRERFAQSKETIGDHFLRHLGIYAYRAGFVRRYVSWAPSQLEQIELLEQLRVLWYGEKIHVAVAKAVPSVGVDTPEDLARVRHVMANR.

Belongs to the KdsB family.

It is found in the cytoplasm. The enzyme catalyses 3-deoxy-alpha-D-manno-oct-2-ulosonate + CTP = CMP-3-deoxy-beta-D-manno-octulosonate + diphosphate. It functions in the pathway nucleotide-sugar biosynthesis; CMP-3-deoxy-D-manno-octulosonate biosynthesis; CMP-3-deoxy-D-manno-octulosonate from 3-deoxy-D-manno-octulosonate and CTP: step 1/1. The protein operates within bacterial outer membrane biogenesis; lipopolysaccharide biosynthesis. In terms of biological role, activates KDO (a required 8-carbon sugar) for incorporation into bacterial lipopolysaccharide in Gram-negative bacteria. This is 3-deoxy-manno-octulosonate cytidylyltransferase from Pectobacterium carotovorum subsp. carotovorum (strain PC1).